The chain runs to 1009 residues: 2-oxoglutarate dehydrogenase, mitochondrial (1009 aa).

A mitochondrion-targeting transit peptide spans 1 to 39; it reads MLRFIPSSAKARALRRSAVTAYRLNRLTCLSSLQQNRTF. Positions 305, 404, 437, 439, and 669 each coordinate thiamine diphosphate. Residues Asp404, Asn437, and Ile439 each coordinate Mg(2+).

The protein belongs to the alpha-ketoglutarate dehydrogenase family. Requires thiamine diphosphate as cofactor. It depends on Mg(2+) as a cofactor.

It localises to the mitochondrion matrix. The enzyme catalyses N(6)-[(R)-lipoyl]-L-lysyl-[protein] + 2-oxoglutarate + H(+) = N(6)-[(R)-S(8)-succinyldihydrolipoyl]-L-lysyl-[protein] + CO2. With respect to regulation, catabolite repressed. Functionally, the 2-oxoglutarate dehydrogenase complex catalyzes the overall conversion of 2-oxoglutarate to succinyl-CoA and CO(2). It contains multiple copies of three enzymatic components: 2-oxoglutarate dehydrogenase (E1), dihydrolipoamide succinyltransferase (E2) and lipoamide dehydrogenase (E3). This is 2-oxoglutarate dehydrogenase, mitochondrial (kgd1) from Schizosaccharomyces pombe (strain 972 / ATCC 24843) (Fission yeast).